A 127-amino-acid polypeptide reads, in one-letter code: Small ribosomal subunit protein uS11 (127 aa).

The protein belongs to the universal ribosomal protein uS11 family. In terms of assembly, part of the 30S ribosomal subunit.

Functionally, located on the platform of the 30S subunit. This is Small ribosomal subunit protein uS11 from Picrophilus torridus (strain ATCC 700027 / DSM 9790 / JCM 10055 / NBRC 100828 / KAW 2/3).